Reading from the N-terminus, the 101-residue chain is uncharacterized protein (101 aa).

This is an uncharacterized protein from Cupriavidus necator (strain ATCC 17699 / DSM 428 / KCTC 22496 / NCIMB 10442 / H16 / Stanier 337) (Ralstonia eutropha).